We begin with the raw amino-acid sequence, 674 residues long: UvrABC system protein B (674 aa).

Residues 26–414 enclose the Helicase ATP-binding domain; the sequence is EGLDSGLAHQ…SGNDIAEQVV (389 aa). 39-46 provides a ligand contact to ATP; sequence GVTGSGKT. Residues 92-115 carry the Beta-hairpin motif; the sequence is YYDYYQPEAYVPTTDTFIEKDASV. The 155-residue stretch at 432–586 folds into the Helicase C-terminal domain; sequence QVDDLLSEIR…ALHNKKNGIT (155 aa). Residues 634 to 669 enclose the UVR domain; that stretch reads ELEIQRLETEMYDLAQNLEFEKAAEARDKIHTLRQQ.

Belongs to the UvrB family. In terms of assembly, forms a heterotetramer with UvrA during the search for lesions. Interacts with UvrC in an incision complex.

The protein localises to the cytoplasm. The UvrABC repair system catalyzes the recognition and processing of DNA lesions. A damage recognition complex composed of 2 UvrA and 2 UvrB subunits scans DNA for abnormalities. Upon binding of the UvrA(2)B(2) complex to a putative damaged site, the DNA wraps around one UvrB monomer. DNA wrap is dependent on ATP binding by UvrB and probably causes local melting of the DNA helix, facilitating insertion of UvrB beta-hairpin between the DNA strands. Then UvrB probes one DNA strand for the presence of a lesion. If a lesion is found the UvrA subunits dissociate and the UvrB-DNA preincision complex is formed. This complex is subsequently bound by UvrC and the second UvrB is released. If no lesion is found, the DNA wraps around the other UvrB subunit that will check the other stand for damage. The protein is UvrABC system protein B of Photobacterium profundum (strain SS9).